The chain runs to 171 residues: Shikimate kinase (171 aa).

An ATP-binding site is contributed by 13–18 (GVGKST). Position 17 (Ser-17) interacts with Mg(2+). The substrate site is built by Asp-35, Arg-59, and Gly-81. ATP is bound at residue Arg-118. Arg-136 is a binding site for substrate. Arg-153 is an ATP binding site.

Belongs to the shikimate kinase family. Monomer. Requires Mg(2+) as cofactor.

The protein resides in the cytoplasm. It carries out the reaction shikimate + ATP = 3-phosphoshikimate + ADP + H(+). The protein operates within metabolic intermediate biosynthesis; chorismate biosynthesis; chorismate from D-erythrose 4-phosphate and phosphoenolpyruvate: step 5/7. Functionally, catalyzes the specific phosphorylation of the 3-hydroxyl group of shikimic acid using ATP as a cosubstrate. The chain is Shikimate kinase from Streptomyces coelicolor (strain ATCC BAA-471 / A3(2) / M145).